A 349-amino-acid polypeptide reads, in one-letter code: Phosphoribosylformylglycinamidine cyclo-ligase (349 aa).

It belongs to the AIR synthase family.

It is found in the cytoplasm. It catalyses the reaction 2-formamido-N(1)-(5-O-phospho-beta-D-ribosyl)acetamidine + ATP = 5-amino-1-(5-phospho-beta-D-ribosyl)imidazole + ADP + phosphate + H(+). It participates in purine metabolism; IMP biosynthesis via de novo pathway; 5-amino-1-(5-phospho-D-ribosyl)imidazole from N(2)-formyl-N(1)-(5-phospho-D-ribosyl)glycinamide: step 2/2. In Jannaschia sp. (strain CCS1), this protein is Phosphoribosylformylglycinamidine cyclo-ligase.